The following is a 189-amino-acid chain: Auxin-induced protein IAA4 (189 aa).

Residues 8–12 carry the EAR-like (transcriptional repression) motif; that stretch reads LRLGL. The PB1 domain maps to 92–179; the sequence is GIFVKVSMDG…SCKRLRIMKG (88 aa).

The protein belongs to the Aux/IAA family. In terms of assembly, homodimers and heterodimers. Post-translationally, phosphorylated by phytochrome A in vitro.

It localises to the nucleus. Functionally, aux/IAA proteins are short-lived transcriptional factors that function as repressors of early auxin response genes at low auxin concentrations. Repression is thought to result from the interaction with auxin response factors (ARFs), proteins that bind to the auxin-responsive promoter element (AuxRE). Formation of heterodimers with ARF proteins may alter their ability to modulate early auxin response genes expression. This is Auxin-induced protein IAA4 (IAA4/5) from Pisum sativum (Garden pea).